The following is a 1081-amino-acid chain: Teashirt homolog 3 (1081 aa).

Disordered regions lie at residues 141–161 and 238–257; these read PSSEKNNGSSSSSSSSSSSCG and HYRDDNHETDNNNPKRWSKP. A compositionally biased stretch (low complexity) spans 148 to 161; it reads GSSSSSSSSSSSCG. 2 C2H2-type zinc fingers span residues 214 to 238 and 275 to 299; these read FRCKDCSAAYDTLVELTVHMNETGH and LKCMYCGHSFESLQDLSVHMIKTKH. The segment covering 238 to 247 has biased composition (basic and acidic residues); the sequence is HYRDDNHETD. The interval 325–364 is disordered; the sequence is SLELELPSSPDSTGGTPKATISDTNDALQKNSNPYITPNN. A compositionally biased stretch (polar residues) spans 335–364; the sequence is DSTGGTPKATISDTNDALQKNSNPYITPNN. The C2H2-type 3; atypical zinc finger occupies 386–404; the sequence is LKCMECGSSHDTLQELTAH. Residues 473–491 show a composition bias toward basic and acidic residues; sequence EVDKEKAVTDEKPKQKDKP. Disordered regions lie at residues 473–502, 579–604, 626–687, and 855–897; these read EVDKEKAVTDEKPKQKDKPGEEEEKCDISS, NSEIVSPTKNQTLVSPPSSQTSPMPK, EKMK…LAEP, and TESH…RQSN. Polar residues predominate over residues 581–603; sequence EIVSPTKNQTLVSPPSSQTSPMP. The stretch at 606 to 630 forms a coiled coil; the sequence is NFHAMEELVKKVTEKVAKVEEKMKE. Ser-682 is modified (phosphoserine). Residues 856 to 869 show a composition bias toward low complexity; that stretch reads ESHTSKSSTPSSIS. A DNA-binding region (homeobox; atypical) is located at residues 891-961; the sequence is RKGRQSNWNP…NVKYQLRRTG (71 aa). 2 C2H2-type zinc fingers span residues 976–998 and 1041–1064; these read FFCNDCASQIRTPSTYISHLESH and YQCKLCNRTFASKHAVKLHLSKTH.

The protein belongs to the teashirt C2H2-type zinc-finger protein family. Interacts (via homeobox domain) with APBB1 (via PID domain 1). Interacts (via N-terminus) with HDAC1 and HDAC2; the interaction is direct. Found in a trimeric complex with APBB1 and HDAC1; the interaction between HDAC1 and APBB1 is mediated by TSHZ3. Expressed in brain; strongly reduced in post-mortem elderly subjects with Alzheimer disease. Expressed in the fetal neocortex.

It is found in the nucleus. The protein localises to the cell projection. The protein resides in the growth cone. Functionally, transcriptional regulator involved in developmental processes. Functions in association with APBB1, SET and HDAC factors as a transcriptional repressor, that inhibits the expression of CASP4. TSHZ3-mediated transcription repression involves the recruitment of histone deacetylases HDAC1 and HDAC2. Associates with chromatin in a region surrounding the CASP4 transcriptional start site(s). Regulates the development of neurons involved in both respiratory rhythm and airflow control. Promotes maintenance of nucleus ambiguus (nA) motoneurons, which govern upper airway function, and establishes a respiratory rhythm generator (RRG) activity compatible with survival at birth. Involved in the differentiation of the proximal uretic smooth muscle cells during developmental processes. Involved in the up-regulation of myocardin, that directs the expression of smooth muscle cells in the proximal ureter. Involved in the modulation of glutamatergic synaptic transmission and long-term synaptic potentiation. The sequence is that of Teashirt homolog 3 (TSHZ3) from Homo sapiens (Human).